A 52-amino-acid polypeptide reads, in one-letter code: Phospholamban (52 aa).

Methionine 1 carries the post-translational modification N-acetylmethionine. The Cytoplasmic portion of the chain corresponds to methionine 1–leucine 31. Serine 16 carries the post-translational modification Phosphoserine; by PKA and DMPK. The involved in HAX1 binding stretch occupies residues serine 16–glutamine 22. A Phosphothreonine; by CaMK2 modification is found at threonine 17. Residues phenylalanine 32 to leucine 52 form a helical membrane-spanning segment. Cysteine 36 is lipidated: S-palmitoyl cysteine.

Belongs to the phospholamban family. Homopentamer. Can also form heterooligomers with other sarcoplasmic/endoplasmic reticulum calcium ATPase (SERCA) regulators ARLN, ERLN, SLN and STRIT1/DWORF. Monomer. Interacts with HAX1. Interacts as a monomer with ATP2A2; the interaction decreases ATP2A2 Ca(2+) affinity. Interacts with VMP1; VMP1 competes with PLN and SLN to prevent them from forming an inhibitory complex with ATP2A2. Interacts with S100A1 in a Ca(2+)-dependent manner. Phosphorylation by PKA abolishes the inhibition of ATP2A2-mediated calcium uptake. Phosphorylated at Thr-17 by CaMK2, and in response to beta-adrenergic stimulation. Phosphorylation by DMPK may stimulate sarcoplasmic reticulum calcium uptake in cardiomyocytes. Post-translationally, palmitoylated by ZDHHC16, promoting formation of the homopentamer. In terms of processing, in elongated spermatids, proteolytically cleaved by SPPL2C which modulates intracellular Ca(2+) homeostasis. As to expression, heart muscle (at protein level).

It localises to the endoplasmic reticulum membrane. The protein localises to the sarcoplasmic reticulum membrane. Its subcellular location is the mitochondrion membrane. It is found in the membrane. Reversibly inhibits the activity of ATP2A2/SERCA2 in cardiac sarcoplasmic reticulum by decreasing the apparent affinity of the ATPase for Ca(2+). Binds preferentially to the ATP-bound E1 conformational form of ATP2A2 which predominates at low Ca(2+) concentrations during the diastolic phase of the cardiac cycle. Inhibits ATP2A2 Ca(2+) affinity by disrupting its allosteric activation by ATP. Modulates the contractility of the heart muscle in response to physiological stimuli via its effects on ATP2A2. Modulates calcium re-uptake during muscle relaxation and plays an important role in calcium homeostasis in the heart muscle. The degree of ATP2A2 inhibition depends on the oligomeric state of PLN. ATP2A2 inhibition is alleviated by PLN phosphorylation. Also inhibits the activity of ATP2A3/SERCA3. Controls intracellular Ca(2+) levels in elongated spermatids and may play a role in germ cell differentiation. In the thalamic reticular nucleus of the brain, plays a role in the regulation of sleep patterns and executive functioning. This is Phospholamban from Homo sapiens (Human).